Consider the following 449-residue polypeptide: Ribosomal protein uS12 methylthiotransferase RimO (449 aa).

The 111-residue stretch at 15 to 125 folds into the MTTase N-terminal domain; sequence PRISFVSLGC…VLAAVHEAVP (111 aa). 6 residues coordinate [4Fe-4S] cluster: Cys-24, Cys-60, Cys-89, Cys-156, Cys-160, and Cys-163. One can recognise a Radical SAM core domain in the interval 142 to 379; that stretch reads LTPRHYAYLK…MRTQQKVSAR (238 aa). The region spanning 382-448 is the TRAM domain; that stretch reads KRKVGTRQSV…PYDLSGTAVG (67 aa).

The protein belongs to the methylthiotransferase family. RimO subfamily. The cofactor is [4Fe-4S] cluster.

Its subcellular location is the cytoplasm. The catalysed reaction is L-aspartate(89)-[ribosomal protein uS12]-hydrogen + (sulfur carrier)-SH + AH2 + 2 S-adenosyl-L-methionine = 3-methylsulfanyl-L-aspartate(89)-[ribosomal protein uS12]-hydrogen + (sulfur carrier)-H + 5'-deoxyadenosine + L-methionine + A + S-adenosyl-L-homocysteine + 2 H(+). Its function is as follows. Catalyzes the methylthiolation of an aspartic acid residue of ribosomal protein uS12. In Xanthobacter autotrophicus (strain ATCC BAA-1158 / Py2), this protein is Ribosomal protein uS12 methylthiotransferase RimO.